We begin with the raw amino-acid sequence, 71 residues long: DNA-directed RNA polymerase subunit Rpo10 (71 aa).

Cys-6, Cys-9, Cys-52, and Cys-53 together coordinate Zn(2+).

This sequence belongs to the archaeal Rpo10/eukaryotic RPB10 RNA polymerase subunit family. Part of the RNA polymerase complex. Requires Zn(2+) as cofactor.

The protein localises to the cytoplasm. The enzyme catalyses RNA(n) + a ribonucleoside 5'-triphosphate = RNA(n+1) + diphosphate. Its function is as follows. DNA-dependent RNA polymerase (RNAP) catalyzes the transcription of DNA into RNA using the four ribonucleoside triphosphates as substrates. The sequence is that of DNA-directed RNA polymerase subunit Rpo10 from Methanocella arvoryzae (strain DSM 22066 / NBRC 105507 / MRE50).